Here is a 455-residue protein sequence, read N- to C-terminus: Probable glucarate dehydratase (455 aa).

Substrate is bound by residues H42, T113, Y160, and K215. K217 serves as the catalytic Proton acceptor. Mg(2+) contacts are provided by D245, E276, and N299. Substrate is bound at residue 245–247; it reads DPN. Substrate is bound by residues N299, 349-351, H378, and R431; that span reads HSN. H349 serves as the catalytic Proton acceptor.

Belongs to the mandelate racemase/muconate lactonizing enzyme family. GlucD subfamily. It depends on Mg(2+) as a cofactor.

The catalysed reaction is D-glucarate = 5-dehydro-4-deoxy-D-glucarate + H2O. It participates in carbohydrate acid metabolism; D-glucarate degradation; 2,5-dioxopentanoate from D-glucarate: step 1/2. Functionally, catalyzes the dehydration of glucarate to 5-keto-4-deoxy-D-glucarate (5-kdGluc). The chain is Probable glucarate dehydratase (gudD) from Bacillus subtilis (strain 168).